A 267-amino-acid chain; its full sequence is Low affinity immunoglobulin gamma Fc region receptor III (267 aa).

A signal peptide spans 1–36 (MTLETQMFQNAHSGSQWLLPPLTMLLLFAFADRQTA). Residues 37–221 (NLPKAVVKRD…STSSLVWFHA (185 aa)) are Extracellular-facing. Ig-like C2-type domains lie at 39 to 121 (PKAV…EVIS) and 122 to 204 (DWLL…VTIT). Intrachain disulfides connect Cys-62–Cys-104 and Cys-143–Cys-187. Asn-70, Asn-78, Asn-97, Asn-171, and Asn-178 each carry an N-linked (GlcNAc...) asparagine glycan. A helical transmembrane segment spans residues 222-241 (AFCLVMCLLFAVDTGLYFCV). Topologically, residues 242–267 (RRNLQTSGEDWRKSLSVGKYKAPQDK) are cytoplasmic.

In terms of assembly, may form multisubunit complex with other heteroproteins. This association is required for efficient cell-surface expression. Does not associate with CD3 zeta. As to expression, expressed on natural killer cells and macrophages.

It is found in the cell membrane. Functionally, receptor for the Fc region of complexed immunoglobulins gamma. Low affinity receptor which binds to IgG1, IgG2a and IgG2b. Mediates neutrophil activation by IgG complexes redundantly with Fcgr4. In Rattus norvegicus (Rat), this protein is Low affinity immunoglobulin gamma Fc region receptor III (Fcgr3).